The following is a 28-amino-acid chain: Cliotide T21 (28 aa).

Residues 1 to 28 constitute a cross-link (cyclopeptide (Asp-Asn)); the sequence is DLQCAETCVHSPCIGPCYCKHGLICYRN. Cystine bridges form between C4–C17, C8–C19, and C13–C25.

Contains 3 disulfide bonds. In terms of processing, this is a cyclic peptide. In terms of tissue distribution, expressed in root nodules but not in seed.

Functionally, probably participates in a plant defense mechanism. Not active against Gram-negative bacterium E.coli ATCC 700926 or Gram-positive bacterium S.aureus ATCC 12600 up to a concentration of 100 uM under low-salt conditions. The polypeptide is Cliotide T21 (Clitoria ternatea (Butterfly pea)).